The chain runs to 90 residues: Acylphosphatase (90 aa).

Positions 3–90 (AVTLKATGRV…QNYHDFRITN (88 aa)) constitute an Acylphosphatase-like domain. Residues Arg18 and Asn36 contribute to the active site.

This sequence belongs to the acylphosphatase family.

It catalyses the reaction an acyl phosphate + H2O = a carboxylate + phosphate + H(+). In Lactiplantibacillus plantarum (strain ATCC BAA-793 / NCIMB 8826 / WCFS1) (Lactobacillus plantarum), this protein is Acylphosphatase (acyP).